Consider the following 59-residue polypeptide: MFSNIGFPGLILILVAVLILFGPKKLPEIGKALGETLKEFKKSTKELTDEAFQEKEKNK.

The chain crosses the membrane as a helical span at residues 1–21 (MFSNIGFPGLILILVAVLILF).

Belongs to the TatA/E family. In terms of assembly, forms a complex with TatC.

Its subcellular location is the cell membrane. Its function is as follows. Part of the twin-arginine translocation (Tat) system that transports large folded proteins containing a characteristic twin-arginine motif in their signal peptide across membranes. TatA could form the protein-conducting channel of the Tat system. The sequence is that of Sec-independent protein translocase protein TatA from Bacillus mycoides (strain KBAB4) (Bacillus weihenstephanensis).